Reading from the N-terminus, the 344-residue chain is Dihydroorotate dehydrogenase (quinone) (344 aa).

FMN is bound by residues 65–69 (AGFDK) and threonine 89. Lysine 69 lines the substrate pocket. Position 114–118 (114–118 (NRMGF)) interacts with substrate. Residues asparagine 145 and asparagine 178 each coordinate FMN. Position 178 (asparagine 178) interacts with substrate. Serine 181 (nucleophile) is an active-site residue. Asparagine 183 serves as a coordination point for substrate. Residues lysine 215 and threonine 243 each contribute to the FMN site. A substrate-binding site is contributed by 244–245 (NT). Residues glycine 269, glycine 298, and 319 to 320 (YT) contribute to the FMN site.

Belongs to the dihydroorotate dehydrogenase family. Type 2 subfamily. As to quaternary structure, monomer. It depends on FMN as a cofactor.

It localises to the cell membrane. It carries out the reaction (S)-dihydroorotate + a quinone = orotate + a quinol. It participates in pyrimidine metabolism; UMP biosynthesis via de novo pathway; orotate from (S)-dihydroorotate (quinone route): step 1/1. Catalyzes the conversion of dihydroorotate to orotate with quinone as electron acceptor. The sequence is that of Dihydroorotate dehydrogenase (quinone) from Clavibacter michiganensis subsp. michiganensis (strain NCPPB 382).